The primary structure comprises 127 residues: MARVKRSVNAKKKRREVLNSAKGYRGQRSRLYRKAKEQMLHSKTYAFRDRRARKGEFRKLWIQRINAAARQNDMTYNRLIQGLKLAEIEVDRKVLAELAVSDAAAFTALCEAAKAALPEDVNAPAAS.

It belongs to the bacterial ribosomal protein bL20 family.

In terms of biological role, binds directly to 23S ribosomal RNA and is necessary for the in vitro assembly process of the 50S ribosomal subunit. It is not involved in the protein synthesizing functions of that subunit. The protein is Large ribosomal subunit protein bL20 of Corynebacterium urealyticum (strain ATCC 43042 / DSM 7109).